A 156-amino-acid chain; its full sequence is MPRKGPAPKHAVVVDPVYGSALVTALVNKVLMSGKKSVAERIVYGALEGAKNKTGNDPVVTLKRALDNVKPTLEVRSRRVGGATYQVPVEVRAGRSTTLALRWIVGYSRARREKTMTERLMNELIDASNGLGASVKRREDTHKMAESNKAFAHYRW.

This sequence belongs to the universal ribosomal protein uS7 family. Part of the 30S ribosomal subunit. Contacts proteins S9 and S11.

In terms of biological role, one of the primary rRNA binding proteins, it binds directly to 16S rRNA where it nucleates assembly of the head domain of the 30S subunit. Is located at the subunit interface close to the decoding center, probably blocks exit of the E-site tRNA. The polypeptide is Small ribosomal subunit protein uS7 (Frankia alni (strain DSM 45986 / CECT 9034 / ACN14a)).